Here is a 71-residue protein sequence, read N- to C-terminus: uncharacterized protein (71 aa).

The next 2 membrane-spanning stretches (helical) occupy residues 9 to 29 and 41 to 61; these read FVIFSLFFTFISVSTFGNINF and FVALFYIFTHTSFTSLCFFGL.

It is found in the membrane. This is an uncharacterized protein from Acheta domesticus (House cricket).